We begin with the raw amino-acid sequence, 124 residues long: Ragulator complex protein LAMTOR3 (124 aa).

The segment at 57 to 70 (TDQGSKLGLSKNKS) is required for interaction with LAMTOR2.

Belongs to the LAMTOR3 family. Part of the Ragulator complex composed of LAMTOR1, LAMTOR2, LAMTOR3, LAMTOR4 and LAMTOR5. LAMTOR4 and LAMTOR5 form a heterodimer that interacts, through LAMTOR1, with a LAMTOR2, LAMTOR3 heterodimer. Interacts with LAMTOR1 and LAMTOR2; the interaction is direct. The Ragulator complex interacts with both the mTORC1 complex and heterodimers constituted of the Rag GTPases RagA/RRAGA, RagB/RRAGB, RagC/RRAGC and RagD/RRAGD; regulated by amino acid availability. The Ragulator complex interacts with SLC38A9; the probable amino acid sensor. Component of the lysosomal folliculin complex (LFC), composed of FLCN, FNIP1 (or FNIP2), RagA/RRAGA or RagB/RRAGB GDP-bound, RagC/RRAGC or RagD/RRAGD GTP-bound, and Ragulator. Interacts with MAP2K1/MEK1 and MAPK2. Interacts with MORG1.

The protein resides in the late endosome membrane. Its function is as follows. As part of the Ragulator complex it is involved in amino acid sensing and activation of mTORC1, a signaling complex promoting cell growth in response to growth factors, energy levels, and amino acids. Activated by amino acids through a mechanism involving the lysosomal V-ATPase, the Ragulator plays a dual role for the small GTPases Rag (RagA/RRAGA, RagB/RRAGB, RagC/RRAGC and/or RagD/RRAGD): it (1) acts as a guanine nucleotide exchange factor (GEF), activating the small GTPases Rag and (2) mediates recruitment of Rag GTPases to the lysosome membrane. Activated Ragulator and Rag GTPases function as a scaffold recruiting mTORC1 to lysosomes where it is in turn activated. Adapter protein that enhances the efficiency of the MAP kinase cascade facilitating the activation of MAPK2. In Homo sapiens (Human), this protein is Ragulator complex protein LAMTOR3.